The following is a 246-amino-acid chain: MADS-box transcription factor 14 (246 aa).

Positions 1-61 (MGRGKVQLKR…GKLYEYATDS (61 aa)) constitute an MADS-box domain. Residues 88–178 (QGNWCHEYRK…QKELVEKQKV (91 aa)) form the K-box domain. The disordered stretch occupies residues 180 to 199 (KQQVQWDQTQPQTSSSSSSF).

May interact with the K-box of MADS1 and MADS6. In terms of tissue distribution, highly expressed in sterile lemmas, at intermediate levels in stamens, and weakly in lemmas, paleas and carpels.

The protein localises to the nucleus. In terms of biological role, probable transcription factor. May be involved in the control of flowering time. This chain is MADS-box transcription factor 14 (MADS14), found in Oryza sativa subsp. japonica (Rice).